We begin with the raw amino-acid sequence, 62 residues long: Large ribosomal subunit protein bL28 (62 aa).

The disordered stretch occupies residues 1–28; that stretch reads MARKCVITGRKSRSGNSRSHAMNASKRT. The segment covering 14-26 has biased composition (polar residues); it reads SGNSRSHAMNASK.

Belongs to the bacterial ribosomal protein bL28 family.

In Bacillus licheniformis (strain ATCC 14580 / DSM 13 / JCM 2505 / CCUG 7422 / NBRC 12200 / NCIMB 9375 / NCTC 10341 / NRRL NRS-1264 / Gibson 46), this protein is Large ribosomal subunit protein bL28.